The sequence spans 96 residues: Small ribosomal subunit protein bS6 (96 aa).

Belongs to the bacterial ribosomal protein bS6 family.

Its function is as follows. Binds together with bS18 to 16S ribosomal RNA. This Salinispora arenicola (strain CNS-205) protein is Small ribosomal subunit protein bS6.